A 70-amino-acid polypeptide reads, in one-letter code: Protein FlmC homolog (70 aa).

Positions 1-21 (MSSPHQDSLLPRFAQGEEGHE) are disordered.

The protein is Protein FlmC homolog of Escherichia coli.